A 366-amino-acid polypeptide reads, in one-letter code: Carbamoyl phosphate synthase small chain (366 aa).

Residues 1-171 (MQSKRYLVLE…KTPYVSTGKD (171 aa)) are CPSase. 3 residues coordinate L-glutamine: S47, G221, and G223. The Glutamine amidotransferase type-1 domain occupies 173-360 (SVVLVDFGKK…VAMMTNFKEK (188 aa)). The active-site Nucleophile is C248. The L-glutamine site is built by L249, Q252, N290, G292, and Y293. Active-site residues include H333 and E335.

Belongs to the CarA family. In terms of assembly, composed of two chains; the small (or glutamine) chain promotes the hydrolysis of glutamine to ammonia, which is used by the large (or ammonia) chain to synthesize carbamoyl phosphate. Tetramer of heterodimers (alpha,beta)4.

It carries out the reaction hydrogencarbonate + L-glutamine + 2 ATP + H2O = carbamoyl phosphate + L-glutamate + 2 ADP + phosphate + 2 H(+). The catalysed reaction is L-glutamine + H2O = L-glutamate + NH4(+). The protein operates within amino-acid biosynthesis; L-arginine biosynthesis; carbamoyl phosphate from bicarbonate: step 1/1. Its pathway is pyrimidine metabolism; UMP biosynthesis via de novo pathway; (S)-dihydroorotate from bicarbonate: step 1/3. Small subunit of the glutamine-dependent carbamoyl phosphate synthetase (CPSase). CPSase catalyzes the formation of carbamoyl phosphate from the ammonia moiety of glutamine, carbonate, and phosphate donated by ATP, constituting the first step of 2 biosynthetic pathways, one leading to arginine and/or urea and the other to pyrimidine nucleotides. The small subunit (glutamine amidotransferase) binds and cleaves glutamine to supply the large subunit with the substrate ammonia. The chain is Carbamoyl phosphate synthase small chain from Staphylococcus aureus (strain COL).